The sequence spans 556 residues: Potassium-transporting ATPase potassium-binding subunit (556 aa).

10 consecutive transmembrane segments (helical) span residues 6–26, 65–85, 133–153, 176–196, 249–269, 283–303, 378–398, 419–439, 483–503, and 526–546; these read AGLI…VPLG, GVLA…LVQG, GLAV…VALV, LRIL…GGAI, PTAW…FSLP, YAIA…MLWF, GLYG…LMVG, YFLV…ALPG, ALGL…LALA, and FVGM…LPML.

Belongs to the KdpA family. In terms of assembly, the system is composed of three essential subunits: KdpA, KdpB and KdpC.

The protein localises to the cell membrane. Functionally, part of the high-affinity ATP-driven potassium transport (or Kdp) system, which catalyzes the hydrolysis of ATP coupled with the electrogenic transport of potassium into the cytoplasm. This subunit binds the extracellular potassium ions and delivers the ions to the membrane domain of KdpB through an intramembrane tunnel. In Mycobacterium avium (strain 104), this protein is Potassium-transporting ATPase potassium-binding subunit.